A 344-amino-acid chain; its full sequence is Uroporphyrinogen decarboxylase (344 aa).

Residues 23-27, Asp73, Tyr149, Thr204, and His321 each bind substrate; that span reads RQAGR.

The protein belongs to the uroporphyrinogen decarboxylase family. In terms of assembly, homodimer.

Its subcellular location is the cytoplasm. The enzyme catalyses uroporphyrinogen III + 4 H(+) = coproporphyrinogen III + 4 CO2. The protein operates within porphyrin-containing compound metabolism; protoporphyrin-IX biosynthesis; coproporphyrinogen-III from 5-aminolevulinate: step 4/4. Functionally, catalyzes the decarboxylation of four acetate groups of uroporphyrinogen-III to yield coproporphyrinogen-III. The sequence is that of Uroporphyrinogen decarboxylase from Francisella tularensis subsp. novicida (strain U112).